Consider the following 354-residue polypeptide: Protein RecA (354 aa).

65–72 serves as a coordination point for ATP; it reads GPESSGKT.

It belongs to the RecA family.

Its subcellular location is the cytoplasm. Functionally, can catalyze the hydrolysis of ATP in the presence of single-stranded DNA, the ATP-dependent uptake of single-stranded DNA by duplex DNA, and the ATP-dependent hybridization of homologous single-stranded DNAs. It interacts with LexA causing its activation and leading to its autocatalytic cleavage. The protein is Protein RecA of Aeromonas hydrophila subsp. hydrophila (strain ATCC 7966 / DSM 30187 / BCRC 13018 / CCUG 14551 / JCM 1027 / KCTC 2358 / NCIMB 9240 / NCTC 8049).